A 200-amino-acid chain; its full sequence is 3-isopropylmalate dehydratase small subunit 2 (200 aa).

The protein belongs to the LeuD family. LeuD type 1 subfamily. As to quaternary structure, heterodimer of LeuC and LeuD.

It catalyses the reaction (2R,3S)-3-isopropylmalate = (2S)-2-isopropylmalate. The protein operates within amino-acid biosynthesis; L-leucine biosynthesis; L-leucine from 3-methyl-2-oxobutanoate: step 2/4. Its function is as follows. Catalyzes the isomerization between 2-isopropylmalate and 3-isopropylmalate, via the formation of 2-isopropylmaleate. The protein is 3-isopropylmalate dehydratase small subunit 2 of Mannheimia succiniciproducens (strain KCTC 0769BP / MBEL55E).